The sequence spans 306 residues: Cathepsin Z (306 aa).

Residues 1 to 20 (MLAILFNFFLLTYFTNITLG) form the signal peptide. Residues 21 to 65 (KVGKSIDLDTRNGYNVHGCYKQTGKIYAHKTYPRQYEAENYNFDD) constitute a propeptide, activation peptide. Intrachain disulfides connect cysteine 39/cysteine 96, cysteine 93/cysteine 136, cysteine 130/cysteine 168, cysteine 158/cysteine 174, and cysteine 177/cysteine 182. Cysteine 96 is a catalytic residue. Residue asparagine 187 is glycosylated (N-linked (GlcNAc...) asparagine). A disulfide bond links cysteine 217 and cysteine 299. Residues histidine 243 and asparagine 265 contribute to the active site. The N-linked (GlcNAc...) asparagine glycan is linked to asparagine 286.

The protein belongs to the peptidase C1 family.

It localises to the cytoplasmic vesicle. The protein resides in the secretory vesicle. Its subcellular location is the secreted. The catalysed reaction is Release of C-terminal amino acid residues with broad specificity, but lacks action on C-terminal proline. Shows weak endopeptidase activity.. The disulfide bridge formed between Cys-39 in the propeptide and the active site residue Cys-96 may prevent activation of the zymogen through formation of a reversible covalent bond with the active site residue. Functionally, exhibits carboxy-monopeptidase as well as carboxy-dipeptidase activity. Plays an essential role in molting, a process during larval stages in which a new cuticle is formed and the old cuticle is shed. Required for the degradation and shedding of the old cuticle. This Onchocerca volvulus protein is Cathepsin Z.